Here is a 202-residue protein sequence, read N- to C-terminus: MKSDSIAVDVPAESSSAIKGKAPLLGLARDHTGSGGYKRGLSIFDFLLRLAAIVAALAAAATMGTSDETLPFFTQFLQFEASYDDLPTFQFFVVAIAIVTGYLVLSLPFSVVTIVRPLAVAPRLLLLVLDTAALALDTAAASAAAAIVYLAHNGNTNTNWLPICQQFGDFCQKTSGAVVSAFASVTFLAILVVISGVSLKRP.

The Cytoplasmic segment spans residues 1-40 (MKSDSIAVDVPAESSSAIKGKAPLLGLARDHTGSGGYKRG). A helical membrane pass occupies residues 41 to 61 (LSIFDFLLRLAAIVAALAAAA). Residues 62 to 90 (TMGTSDETLPFFTQFLQFEASYDDLPTFQ) are Extracellular-facing. The chain crosses the membrane as a helical span at residues 91 to 111 (FFVVAIAIVTGYLVLSLPFSV). The Cytoplasmic segment spans residues 112–130 (VTIVRPLAVAPRLLLLVLD). The chain crosses the membrane as a helical span at residues 131–151 (TAALALDTAAASAAAAIVYLA). At 152-176 (HNGNTNTNWLPICQQFGDFCQKTSG) the chain is on the extracellular side. A helical transmembrane segment spans residues 177 to 197 (AVVSAFASVTFLAILVVISGV). Over 198–202 (SLKRP) the chain is Cytoplasmic.

This sequence belongs to the Casparian strip membrane proteins (CASP) family. Homodimer and heterodimers.

Its subcellular location is the cell membrane. Its function is as follows. Regulates membrane-cell wall junctions and localized cell wall deposition. Required for establishment of the Casparian strip membrane domain (CSD) and the subsequent formation of Casparian strips, a cell wall modification of the root endodermis that determines an apoplastic barrier between the intraorganismal apoplasm and the extraorganismal apoplasm and prevents lateral diffusion. This is Casparian strip membrane protein 4 from Arabidopsis lyrata subsp. lyrata (Lyre-leaved rock-cress).